Consider the following 354-residue polypeptide: Ferrochelatase (354 aa).

Positions 191 and 271 each coordinate Fe cation.

The protein belongs to the ferrochelatase family.

It is found in the cytoplasm. The enzyme catalyses heme b + 2 H(+) = protoporphyrin IX + Fe(2+). Its pathway is porphyrin-containing compound metabolism; protoheme biosynthesis; protoheme from protoporphyrin-IX: step 1/1. Catalyzes the ferrous insertion into protoporphyrin IX. The protein is Ferrochelatase of Rickettsia bellii (strain OSU 85-389).